The following is a 359-amino-acid chain: DNA replication and repair protein RecF (359 aa).

30 to 37 (GPNAKGKT) is a binding site for ATP.

Belongs to the RecF family.

Its subcellular location is the cytoplasm. The RecF protein is involved in DNA metabolism; it is required for DNA replication and normal SOS inducibility. RecF binds preferentially to single-stranded, linear DNA. It also seems to bind ATP. The protein is DNA replication and repair protein RecF of Protochlamydia amoebophila (strain UWE25).